Consider the following 382-residue polypeptide: MKSLSFSFLVTLFLYLTLSSARTLGKDVNKRVTAGSLQQVTGFGDNASGTLMYIYVPKNLATNPGIVVAIHYCTGTAQAYYTGSPYAQLAEQYGFIVIYPQSPYSGTCWDVSSQAALTHNGGGDSNSIANMVTWTISQYNANTAKVFVTGSSSGAMMTNVMAATYPELFAAATVYSGVGAGCFYSSSNQADAWNSSCATGSVISTPAVWGGIAKNMYSGYSGSRPRMQIYHGSADTTLYPQNYYETCKQWAGVFGYNYDSPQSTLANTPDANYQTTNWGPNLQGIYATGVGHTVPIHGAKDMEWFGFSGSGSSSTTTASATKTSTTSTTSTKTTSSTSSTTTSSTGVAAHWGQCGGSGWTGPTVCESGYTCTYSNAWYSQCL.

The first 21 residues, 1–21, serve as a signal peptide directing secretion; that stretch reads MKSLSFSFLVTLFLYLTLSSA. The propeptide occupies 22-31; it reads RTLGKDVNKR. A catalytic region spans residues 35-307; the sequence is GSLQQVTGFG…GAKDMEWFGF (273 aa). An N-linked (GlcNAc...) asparagine glycan is attached at asparagine 46. Residue serine 152 is the Charge relay system of the active site. N-linked (GlcNAc...) asparagine glycosylation is present at asparagine 194. Positions 308-345 are ser/Thr-rich linker; it reads SGSGSSSTTTASATKTSTTSTTSTKTTSSTSSTTTSST. Residues 313–345 are compositionally biased toward low complexity; it reads SSTTTASATKTSTTSTTSTKTTSSTSSTTTSST. The tract at residues 313 to 346 is disordered; the sequence is SSTTTASATKTSTTSTTSTKTTSSTSSTTTSSTG. The CBM1 domain maps to 346–382; it reads GVAAHWGQCGGSGWTGPTVCESGYTCTYSNAWYSQCL.

Belongs to the carbohydrate esterase 1 (CE1) family. AxeA subfamily. As to quaternary structure, monomer. In terms of processing, glycosylated.

The protein resides in the secreted. The catalysed reaction is Deacetylation of xylans and xylo-oligosaccharides.. Its pathway is glycan degradation; xylan degradation. Its activity is regulated as follows. Inactivated by phenylmethylsulfonylfluorid (PMSF), a specific inhibitor of serine esterases. Its function is as follows. Acetylxylan esterase involved in the hydrolysis of xylan, a major structural heterogeneous polysaccharide found in plant biomass representing the second most abundant polysaccharide in the biosphere, after cellulose. Degrades acetylated xylans by cleaving acetyl side groups from the hetero-xylan backbone. In Talaromyces purpureogenus (Soft rot fungus), this protein is Acetylxylan esterase A (axeA).